Here is a 376-residue protein sequence, read N- to C-terminus: tRNA 2-selenouridine synthase (376 aa).

Positions 15–138 constitute a Rhodanese domain; it reads FVAGKPLIDL…MRQYLIGVIE (124 aa). C98 serves as the catalytic S-selanylcysteine intermediate.

It belongs to the SelU family. As to quaternary structure, monomer.

It carries out the reaction 5-methylaminomethyl-2-thiouridine(34) in tRNA + selenophosphate + (2E)-geranyl diphosphate + H2O + H(+) = 5-methylaminomethyl-2-selenouridine(34) in tRNA + (2E)-thiogeraniol + phosphate + diphosphate. It catalyses the reaction 5-methylaminomethyl-2-thiouridine(34) in tRNA + (2E)-geranyl diphosphate = 5-methylaminomethyl-S-(2E)-geranyl-thiouridine(34) in tRNA + diphosphate. The enzyme catalyses 5-methylaminomethyl-S-(2E)-geranyl-thiouridine(34) in tRNA + selenophosphate + H(+) = 5-methylaminomethyl-2-(Se-phospho)selenouridine(34) in tRNA + (2E)-thiogeraniol. The catalysed reaction is 5-methylaminomethyl-2-(Se-phospho)selenouridine(34) in tRNA + H2O = 5-methylaminomethyl-2-selenouridine(34) in tRNA + phosphate. In terms of biological role, involved in the post-transcriptional modification of the uridine at the wobble position (U34) of tRNA(Lys), tRNA(Glu) and tRNA(Gln). Catalyzes the conversion of 2-thiouridine (S2U-RNA) to 2-selenouridine (Se2U-RNA). Acts in a two-step process involving geranylation of 2-thiouridine (S2U) to S-geranyl-2-thiouridine (geS2U) and subsequent selenation of the latter derivative to 2-selenouridine (Se2U) in the tRNA chain. The protein is tRNA 2-selenouridine synthase of Shewanella oneidensis (strain ATCC 700550 / JCM 31522 / CIP 106686 / LMG 19005 / NCIMB 14063 / MR-1).